We begin with the raw amino-acid sequence, 443 residues long: COP9 signalosome complex subunit 2 (443 aa).

Positions 1-275 (MSDMEDDFMC…DESGSPRRTT (275 aa)) are mediates interaction with NIF3L1. The PCI domain maps to 254-416 (AHTDFFEAFK…QLLELDHQKR (163 aa)).

It belongs to the CSN2 family. Component of the CSN complex, composed of COPS1/GPS1, COPS2, COPS3, COPS4, COPS5, COPS6, COPS7 (COPS7A or COPS7B), COPS8 and COPS9 isoform 1. In the complex, it probably interacts directly with COPS1, COPS4, COPS5, COPS6 and COPS7 (COPS7A or COPS7B). Specifically interacts with the ligand binding domain of the thyroid receptor (TR). Does not require the presence of thyroid hormone for its interaction. Interacts with CUL1 and CUL2. Interacts with IRF8/ICSBP1 and with nuclear receptors NR2F1 and NR0B1. Interacts with NIF3L1. Phosphorylated by CK2 and PKD kinases.

It localises to the cytoplasm. The protein localises to the nucleus. Functionally, essential component of the COP9 signalosome complex (CSN), a complex involved in various cellular and developmental processes. The CSN complex is an essential regulator of the ubiquitin (Ubl) conjugation pathway by mediating the deneddylation of the cullin subunits of SCF-type E3 ligase complexes, leading to decrease the Ubl ligase activity of SCF-type complexes such as SCF, CSA or DDB2. The complex is also involved in phosphorylation of p53/TP53, c-jun/JUN, IkappaBalpha/NFKBIA, ITPK1 and IRF8/ICSBP, possibly via its association with CK2 and PKD kinases. CSN-dependent phosphorylation of TP53 and JUN promotes and protects degradation by the Ubl system, respectively. Involved in early stage of neuronal differentiation via its interaction with NIF3L1. The polypeptide is COP9 signalosome complex subunit 2 (COPS2) (Homo sapiens (Human)).